Consider the following 1798-residue polypeptide: Non-reducing polyketide synthase nscA (1798 aa).

Residues 25–256 (RRLDQHSKDR…PLPVYDGLCH (232 aa)) form an N-terminal acylcarrier protein transacylase domain (SAT) region. A Ketosynthase family 3 (KS3) domain is found at 392–825 (SSKLAIVGMA…GGNTTLLLED (434 aa)). Residues 436–455 (NTHYDPTGKTENTTQTPYGN) form a disordered region. Polar residues predominate over residues 444–453 (KTENTTQTPY). Active-site for beta-ketoacyl synthase activity residues include C565, H700, and H743. The segment at 931-1230 (FTGQGAYYHG…PSASAMSSCR (300 aa)) is malonyl-CoA:ACP transacylase (MAT) domain. Positions 1322–1458 (HQITAETVEA…AMIRFEDPVA (137 aa)) are N-terminal hotdog fold. Residues 1322 to 1632 (HQITAETVEA…FRRVPRLLMD (311 aa)) form the PKS/mFAS DH domain. The active-site Proton acceptor; for dehydratase activity is H1354. Residues 1390–1628 (HMNLTDVEVL…GMIRFRRVPR (239 aa)) form a product template (PT) domain region. The C-terminal hotdog fold stretch occupies residues 1486 to 1632 (ASRLSKPLAY…FRRVPRLLMD (147 aa)). Catalysis depends on D1543, which acts as the Proton donor; for dehydratase activity. Residues 1685–1719 (MASKAPEPAPLLATSSESSTPKESPIVTPAESERA) form a disordered region. Positions 1698–1709 (TSSESSTPKESP) are enriched in low complexity. The 78-residue stretch at 1721–1798 (PVDNNMISQC…EMTAWIEEYC (78 aa)) folds into the Carrier domain. S1758 bears the O-(pantetheine 4'-phosphoryl)serine mark.

Pantetheine 4'-phosphate serves as cofactor.

The protein operates within secondary metabolite biosynthesis. In terms of biological role, non-reducing polyketide synthase; part of the gene cluster that mediates the biosynthesis of neosartoricin B, a prenylated anthracenone that probably exhibits T-cell antiproliferative activity, suggestive of a physiological role as an immunosuppressive agent. The non-reducing polyketide synthase nscA probably synthesizes and cyclizes the decaketide backbone. The hydrolase nscB then mediates the product release through hydrolysis followed by spontaneous decarboxylation. The prenyltransferase nscD catalyzes the addition of the dimethylallyl group to the aromatic C5. The FAD-dependent monooxygenase nscC is then responsible for the stereospecific hydroxylation at C2. Neosartoricin B can be converted into two additional compounds neosartoricins C and D. Neosartoricin C is a spirocyclic compound that is cyclized through the attack of C3 hydroxyl on C14, followed by dehydration. On the other hand, neosartoricin D is a further cyclized compound in which attack of C2 on C14 in neosartoricin C results in the formation of the acetal-containing dioxabicyclo-octanone ring. Both of these compounds are novel and possibly represent related metabolites of the gene cluster. The sequence is that of Non-reducing polyketide synthase nscA from Arthroderma benhamiae (strain ATCC MYA-4681 / CBS 112371) (Trichophyton mentagrophytes).